Consider the following 308-residue polypeptide: Probable manganese-dependent inorganic pyrophosphatase (308 aa).

Mn(2+)-binding residues include His-9, Asp-13, Asp-15, Asp-74, His-96, and Asp-148.

This sequence belongs to the PPase class C family. The cofactor is Mn(2+).

It is found in the cytoplasm. The catalysed reaction is diphosphate + H2O = 2 phosphate + H(+). This is Probable manganese-dependent inorganic pyrophosphatase from Oceanobacillus iheyensis (strain DSM 14371 / CIP 107618 / JCM 11309 / KCTC 3954 / HTE831).